The chain runs to 158 residues: SsrA-binding protein (158 aa).

Positions 136–151 are enriched in basic and acidic residues; the sequence is KRADSKSRDWARDKQR. The interval 136–158 is disordered; the sequence is KRADSKSRDWARDKQRIMKHSTR.

Belongs to the SmpB family.

Its subcellular location is the cytoplasm. Its function is as follows. Required for rescue of stalled ribosomes mediated by trans-translation. Binds to transfer-messenger RNA (tmRNA), required for stable association of tmRNA with ribosomes. tmRNA and SmpB together mimic tRNA shape, replacing the anticodon stem-loop with SmpB. tmRNA is encoded by the ssrA gene; the 2 termini fold to resemble tRNA(Ala) and it encodes a 'tag peptide', a short internal open reading frame. During trans-translation Ala-aminoacylated tmRNA acts like a tRNA, entering the A-site of stalled ribosomes, displacing the stalled mRNA. The ribosome then switches to translate the ORF on the tmRNA; the nascent peptide is terminated with the 'tag peptide' encoded by the tmRNA and targeted for degradation. The ribosome is freed to recommence translation, which seems to be the essential function of trans-translation. The sequence is that of SsrA-binding protein from Photobacterium profundum (strain SS9).